The following is a 52-amino-acid chain: Metallothionein-2 (52 aa).

2 consecutive repeats follow at residues 43–47 (QTCKC) and 48–52 (QTCKC).

Belongs to the metallothionein superfamily. Type 10 family.

Its function is as follows. The metallothioneins are involved in the cellular sequestration of toxic metal ions. This is Metallothionein-2 (MT-II) from Candida glabrata (strain ATCC 2001 / BCRC 20586 / JCM 3761 / NBRC 0622 / NRRL Y-65 / CBS 138) (Yeast).